The following is a 314-amino-acid chain: DNA-directed RNA polymerase subunit alpha (314 aa).

Residues methionine 1–threonine 228 are alpha N-terminal domain (alpha-NTD). An alpha C-terminal domain (alpha-CTD) region spans residues lysine 245 to aspartate 314.

It belongs to the RNA polymerase alpha chain family. Homodimer. RNAP is composed of a core of 2 alpha, a beta and a beta' subunit. The core is associated with a delta subunit, and at least one of epsilon or omega. When a sigma factor is associated with the core the holoenzyme is formed, which can initiate transcription.

The catalysed reaction is RNA(n) + a ribonucleoside 5'-triphosphate = RNA(n+1) + diphosphate. DNA-dependent RNA polymerase catalyzes the transcription of DNA into RNA using the four ribonucleoside triphosphates as substrates. The sequence is that of DNA-directed RNA polymerase subunit alpha from Bacillus subtilis (strain 168).